The following is a 458-amino-acid chain: Periphilin-1 (458 aa).

2 stretches are compositionally biased toward basic and acidic residues: residues 1-18 (MWSE…ERAP) and 63-107 (EGRS…DGFR). 2 disordered regions span residues 1–51 (MWSE…SYNR) and 63–284 (EGRS…LFED). The short motif at 103–109 (RDGFRRK) is the Nuclear localization signal element. A Glycyl lysine isopeptide (Lys-Gly) (interchain with G-Cter in SUMO2) cross-link involves residue Lys109. Phosphoserine is present on residues Ser110, Ser114, Ser133, and Ser140. Residues 116 to 142 (YARERSPYKRDNTFFRESPVGRKDSPH) show a composition bias toward basic and acidic residues. Positions 143–154 (SRSGSSVSSRSY) are enriched in low complexity. Lys160 participates in a covalent cross-link: Glycyl lysine isopeptide (Lys-Gly) (interchain with G-Cter in SUMO2). Phosphoserine occurs at positions 161 and 167. Lys180 is covalently cross-linked (Glycyl lysine isopeptide (Lys-Gly) (interchain with G-Cter in SUMO2)). Basic and acidic residues predominate over residues 181-194 (RQNEGNPERDKERP). At Ser197 the chain carries Phosphoserine. Lys199 is covalently cross-linked (Glycyl lysine isopeptide (Lys-Gly) (interchain with G-Cter in SUMO2)). Ser201 and Ser205 each carry phosphoserine. Positions 205-215 (SPSSGSAVSSS) are enriched in low complexity. A compositionally biased stretch (basic and acidic residues) spans 217–230 (VLDKPSRLTEKELA). Residue Lys227 forms a Glycyl lysine isopeptide (Lys-Gly) (interchain with G-Cter in SUMO2) linkage. 2 positions are modified to N6-acetyllysine; alternate: Lys235 and Lys240. Glycyl lysine isopeptide (Lys-Gly) (interchain with G-Cter in SUMO2); alternate cross-links involve residues Lys235 and Lys240. Residues 237–246 (AAEKLEKSDE) show a composition bias toward basic and acidic residues. A Phosphoserine modification is found at Ser325. Lys328 is covalently cross-linked (Glycyl lysine isopeptide (Lys-Gly) (interchain with G-Cter in SUMO2)). The interval 345–406 (GQTWQQVPPV…TQLRRTTGAP (62 aa)) is disordered. Pro residues predominate over residues 377-386 (PQPPQAPQPL). Residues 388 to 398 (PRKKRVRRTTQ) show a composition bias toward basic residues. Lys453 is covalently cross-linked (Glycyl lysine isopeptide (Lys-Gly) (interchain with G-Cter in SUMO2)).

Homodimer. Component of the HUSH complex; at least composed of TASOR, PPHLN1 and MPHOSPH8. Interacts with SIN3A and HDAC1. May interact with PPL. In terms of processing, substrate of transglutaminase (in vitro). In terms of tissue distribution, ubiquitous.

The protein localises to the nucleus. The protein resides in the cytoplasm. It is found in the chromosome. Component of the HUSH complex, a multiprotein complex that mediates epigenetic repression. The HUSH complex is recruited to genomic loci rich in H3K9me3 and is probably required to maintain transcriptional silencing by promoting recruitment of SETDB1, a histone methyltransferase that mediates further deposition of H3K9me3. In the HUSH complex, contributes to the maintenance of the complex at chromatin. Acts as a transcriptional corepressor and regulates the cell cycle, probably via the HUSH complex. The HUSH complex is also involved in the silencing of unintegrated retroviral DNA: some part of the retroviral DNA formed immediately after infection remains unintegrated in the host genome and is transcriptionally repressed. May be involved in epithelial differentiation by contributing to epidermal integrity and barrier formation. The protein is Periphilin-1 of Homo sapiens (Human).